We begin with the raw amino-acid sequence, 33 residues long: Dermaseptin-H8 (33 aa).

A Leucine amide modification is found at leucine 33.

As to expression, expressed by the skin glands.

The protein localises to the secreted. In terms of biological role, has antimicrobial activity. The sequence is that of Dermaseptin-H8 from Pithecopus hypochondrialis (Orange-legged leaf frog).